We begin with the raw amino-acid sequence, 107 residues long: MQGPVIIPLISTLGLSFLAILLAYKISFSVIGFINSTLPTTLFPSKPYMLFVKISTISPLTCPSLIILTPALTWSLTALSMAYLYSSYKPNTFFTLSKNVSSFLTTG.

2 helical membrane passes run 3-23 and 65-85; these read GPVI…ILLA and LIIL…AYLY.

The protein localises to the cell membrane. Functionally, possibly the antitoxin component of a type II toxin-antitoxin (TA) system. Its cognate toxin is VapC5 (Potential). The sequence is that of Putative antitoxin VapB5 (vapB5) from Methanocaldococcus jannaschii (strain ATCC 43067 / DSM 2661 / JAL-1 / JCM 10045 / NBRC 100440) (Methanococcus jannaschii).